We begin with the raw amino-acid sequence, 64 residues long: Potassium channel toxin alpha-KTx J123 (64 aa).

The signal sequence occupies residues M1 to S21. Disulfide bonds link C30-C52, C37-C60, and C41-C62.

Belongs to the short scorpion toxin superfamily. Potassium channel inhibitor family. Alpha-KTx 11 subfamily. Expressed by the venom gland.

It localises to the secreted. This recombinant toxin inhibits mammalian voltage-gated potassium channels Kv1.3/KCNA3 (IC(50)=0.79 nM) and Kv1.2/KCNA2 (IC(50)=26.4 nM). The chain is Potassium channel toxin alpha-KTx J123 from Olivierus martensii (Manchurian scorpion).